Here is a 164-residue protein sequence, read N- to C-terminus: CASP-like protein 1C1 (164 aa).

Residues 1–15 (MGDVEIPPLVKQIVR) are Cytoplasmic-facing. A helical transmembrane segment spans residues 16-36 (GLRGLAFLATILATSFMAASH). Topologically, residues 37–56 (ERAIFPFDYKADYTDLMLFK) are extracellular. The helical transmembrane segment at 57 to 77 (AFLGANIAASLYSFFFVCLPP) threads the bilayer. At 78–83 (KSLLWR) the chain is on the cytoplasmic side. The helical transmembrane segment at 84-104 (LAIVLDVIMFGLLVAMDSAAI) threads the bilayer. At 105 to 132 (AAAYLHKHGDSQAFWPPICSQVPTYCYR) the chain is on the extracellular side. Residues 133-153 (VILAISIGFGGVFMFLLIIII) traverse the membrane as a helical segment. The Cytoplasmic segment spans residues 154–164 (SISVILNPLLV).

The protein belongs to the Casparian strip membrane proteins (CASP) family. Homodimer and heterodimers.

Its subcellular location is the cell membrane. The sequence is that of CASP-like protein 1C1 from Populus trichocarpa (Western balsam poplar).